A 352-amino-acid chain; its full sequence is Glucose-6-phosphatase catalytic subunit 1 (352 aa).

The Lumenal portion of the chain corresponds to 1–27; sequence MDLLHSWGVELAVYLQTRYGKYEGLFD. Residues 28–48 form a helical membrane-spanning segment; it reads LASTVADLHTTFFWLFPIWFH. Topologically, residues 49-56 are cytoplasmic; that stretch reads LRRDTALR. The helical transmembrane segment at 57-77 threads the bilayer; that stretch reads LIWVAVIGDWLNLVLKWVLFG. At 78–113 the chain is on the lumenal side; sequence ERPYWWVHETKFYGAGPAPSLQQFPITCETGPGSPS. Arg-79 contributes to the substrate binding site. A helical membrane pass occupies residues 114–134; sequence GHAMGAAGVWYVMVTALLSIA. His-115 functions as the Proton donor in the catalytic mechanism. At 135-141 the chain is on the cytoplasmic side; sequence REKQCPP. A helical membrane pass occupies residues 142–162; it reads LLYRFLYIGLWMLMGLVELVV. Residues 163-166 lie on the Lumenal side of the membrane; that stretch reads CISR. Arg-166 contributes to the substrate binding site. The chain crosses the membrane as a helical span at residues 167–187; it reads VYMAAHFPHQVIAGIITGTLV. His-172 functions as the Nucleophile in the catalytic mechanism. Topologically, residues 188-205 are cytoplasmic; sequence AEVVSKEKWIYSASLKKY. Residues 206 to 226 traverse the membrane as a helical segment; that stretch reads FLITLFLTSFAVGFYVLLKAL. The Lumenal portion of the chain corresponds to 227–256; sequence DVDLLWTMEKAQKWCIRPEWVHLDSAPFAS. Residues 257–276 form a helical membrane-spanning segment; that stretch reads LLRNMGSLFGLGLGLHSPFY. The Cytoplasmic segment spans residues 277–289; that stretch reads KTTKMRIMSAPLR. The chain crosses the membrane as a helical span at residues 290-310; that stretch reads IGCIVISVSLLHLLDGWTFSP. Residues 311 to 324 are Lumenal-facing; that stretch reads ENHMTFYALSFGKS. A helical membrane pass occupies residues 325-345; sequence AVALLIPTTLVPWALSKIYPV. The Cytoplasmic portion of the chain corresponds to 346–352; that stretch reads KTEGKNL. Positions 349–352 match the Prevents secretion from ER motif; that stretch reads GKNL.

This sequence belongs to the glucose-6-phosphatase family.

It is found in the endoplasmic reticulum membrane. The enzyme catalyses D-glucose 6-phosphate + H2O = D-glucose + phosphate. It functions in the pathway carbohydrate biosynthesis; gluconeogenesis. Its function is as follows. Hydrolyzes glucose-6-phosphate to glucose in the endoplasmic reticulum. Forms with the glucose-6-phosphate transporter (SLC37A4/G6PT) the complex responsible for glucose production in the terminal step of glycogenolysis and gluconeogenesis. Hence, it is the key enzyme in homeostatic regulation of blood glucose levels. This Haplochromis nubilus (Blue Victoria mouthbrooder) protein is Glucose-6-phosphatase catalytic subunit 1 (g6pc1).